A 416-amino-acid chain; its full sequence is Probable glucan 1,3-beta-glucosidase A (416 aa).

The first 22 residues, 1 to 22 (MIFKFSQKALVALCLVVGLAEA), serve as a signal peptide directing secretion. The active-site Proton donor is the Glu-211. Intrachain disulfides connect Cys-291–Cys-415 and Cys-316–Cys-342. Residue Glu-308 is the Nucleophile of the active site.

The protein belongs to the glycosyl hydrolase 5 (cellulase A) family. In terms of assembly, monomer. Mn(2+) serves as cofactor.

The protein localises to the secreted. The catalysed reaction is Successive hydrolysis of beta-D-glucose units from the non-reducing ends of (1-&gt;3)-beta-D-glucans, releasing alpha-glucose.. Beta-glucanases participate in the metabolism of beta-glucan, the main structural component of the cell wall. It could also function biosynthetically as a transglycosylase. The chain is Probable glucan 1,3-beta-glucosidase A (exgA) from Neosartorya fischeri (strain ATCC 1020 / DSM 3700 / CBS 544.65 / FGSC A1164 / JCM 1740 / NRRL 181 / WB 181) (Aspergillus fischerianus).